Reading from the N-terminus, the 2397-residue chain is Cell wall alpha-1,3-glucan synthase mok11 (2397 aa).

The segment at 1683-1705 (SNQQSFDFKSSESDSFPQKSPSV) is disordered. The span at 1687-1698 (SFDFKSSESDSF) shows a compositional bias: low complexity.

It belongs to the glycosyltransferase group 1 family.

It catalyses the reaction [(1-&gt;3)-alpha-D-glucosyl](n) + UDP-alpha-D-glucose = [(1-&gt;3)-alpha-D-glucosyl](n+1) + UDP + H(+). The protein is Cell wall alpha-1,3-glucan synthase mok11 (mok11) of Schizosaccharomyces pombe (strain 972 / ATCC 24843) (Fission yeast).